The chain runs to 316 residues: MENITNISEFILMGFPTAPWLQILLFSIFFITYVFVLLENLVIILTVWVTGSLHKPMYYFLSTMSFLEAWYISVTVPKMLAGFLFRPNTISFLGCMTQLYFFMSLACTECVLLAAMAYDRYVAICWPLRYPVMMTTGFCVQLTISSWVSGFTISMAKVYFISRVAFCGNNVLNHFFCDVSPILKLACMNLSMAETVDFALAIVILIFPLSATVLSYGFIVSTVLQIPSATGQRKAFSTCASHLTVVVIFYTAVIFMYVRPRAIASFNSNKLISAIYAVFTPMLNPIIYCLRNKEVKDAIRKTIAGGRAPALGESIS.

Residues 1–22 (MENITNISEFILMGFPTAPWLQ) lie on the Extracellular side of the membrane. N-linked (GlcNAc...) asparagine glycans are attached at residues N3 and N6. A helical transmembrane segment spans residues 23–43 (ILLFSIFFITYVFVLLENLVI). The Cytoplasmic segment spans residues 44 to 64 (ILTVWVTGSLHKPMYYFLSTM). A helical membrane pass occupies residues 65–85 (SFLEAWYISVTVPKMLAGFLF). The Extracellular portion of the chain corresponds to 86 to 97 (RPNTISFLGCMT). A disulfide bridge connects residues C95 and C187. The helical transmembrane segment at 98-118 (QLYFFMSLACTECVLLAAMAY) threads the bilayer. Over 119–132 (DRYVAICWPLRYPV) the chain is Cytoplasmic. The helical transmembrane segment at 133–153 (MMTTGFCVQLTISSWVSGFTI) threads the bilayer. Residues 154-199 (SMAKVYFISRVAFCGNNVLNHFFCDVSPILKLACMNLSMAETVDFA) are Extracellular-facing. Residues 200–220 (LAIVILIFPLSATVLSYGFIV) form a helical membrane-spanning segment. Topologically, residues 221-237 (STVLQIPSATGQRKAFS) are cytoplasmic. Residues 238 to 258 (TCASHLTVVVIFYTAVIFMYV) traverse the membrane as a helical segment. Over 259–269 (RPRAIASFNSN) the chain is Extracellular. A helical membrane pass occupies residues 270–290 (KLISAIYAVFTPMLNPIIYCL). The Cytoplasmic segment spans residues 291–316 (RNKEVKDAIRKTIAGGRAPALGESIS).

It belongs to the G-protein coupled receptor 1 family. Olfactory epithelium.

It localises to the cell membrane. Its function is as follows. Odorant receptor. In Mus musculus (Mouse), this protein is Olfactory receptor 6B9.